Here is a 391-residue protein sequence, read N- to C-terminus: Protein CapJ (391 aa).

The protein operates within capsule biogenesis; capsule polysaccharide biosynthesis. Functionally, required for the biosynthesis of type 1 capsular polysaccharide. In Staphylococcus aureus, this protein is Protein CapJ (capJ).